Here is a 271-residue protein sequence, read N- to C-terminus: Magnesium dechelatase SGR2, chloroplastic (271 aa).

The transit peptide at M1 to E54 directs the protein to the chloroplast.

Belongs to the staygreen family. As to quaternary structure, interacts with the light harvesting complex II (LHCII). Interacts with the chlorophyll catabolic enzyme (CCE) RCCR.

It is found in the plastid. The protein resides in the chloroplast thylakoid membrane. The enzyme catalyses chlorophyll a + 2 H(+) = pheophytin a + Mg(2+). In terms of biological role, magnesium chelatase involved in chlorophyll a degradation in the chlorophyll-protein complexes of photosystem I (PSI) and photosystem II (PSII). Contributes to the degradation of PSI and PSII in the thylakoid membranes. Required to trigger chlorophyll degradation during natural and dark-induced leaf senescence. Mediates chlorophyll degradation during embryo degreening. Recombinant SGR2 possesses high dechelating activity against chlorophyll a, very low activity against chlorophyllide a, and no activity against chlorophyll b. The polypeptide is Magnesium dechelatase SGR2, chloroplastic (Arabidopsis thaliana (Mouse-ear cress)).